We begin with the raw amino-acid sequence, 169 residues long: S-ribosylhomocysteine lyase (169 aa).

His-54, His-58, and Cys-128 together coordinate Fe cation.

Belongs to the LuxS family. Homodimer. It depends on Fe cation as a cofactor.

It catalyses the reaction S-(5-deoxy-D-ribos-5-yl)-L-homocysteine = (S)-4,5-dihydroxypentane-2,3-dione + L-homocysteine. In terms of biological role, involved in the synthesis of autoinducer 2 (AI-2) which is secreted by bacteria and is used to communicate both the cell density and the metabolic potential of the environment. The regulation of gene expression in response to changes in cell density is called quorum sensing. Catalyzes the transformation of S-ribosylhomocysteine (RHC) to homocysteine (HC) and 4,5-dihydroxy-2,3-pentadione (DPD). This chain is S-ribosylhomocysteine lyase, found in Shewanella sp. (strain MR-7).